Consider the following 359-residue polypeptide: 1-deoxy-D-xylulose 5-phosphate reductoisomerase (359 aa).

Residues threonine 7, glycine 8, serine 9, isoleucine 10, glycine 31, lysine 32, asparagine 33, and asparagine 111 each contribute to the NADPH site. Lysine 112 lines the 1-deoxy-D-xylulose 5-phosphate pocket. An NADPH-binding site is contributed by glutamate 113. A Mn(2+)-binding site is contributed by aspartate 131. 4 residues coordinate 1-deoxy-D-xylulose 5-phosphate: serine 132, glutamate 133, serine 155, and histidine 178. Glutamate 133 is a Mn(2+) binding site. Glycine 184 serves as a coordination point for NADPH. Residues serine 191, asparagine 196, lysine 197, and glutamate 200 each contribute to the 1-deoxy-D-xylulose 5-phosphate site. Glutamate 200 contributes to the Mn(2+) binding site.

Belongs to the DXR family. The cofactor is Mg(2+). Mn(2+) is required as a cofactor.

The catalysed reaction is 2-C-methyl-D-erythritol 4-phosphate + NADP(+) = 1-deoxy-D-xylulose 5-phosphate + NADPH + H(+). It participates in isoprenoid biosynthesis; isopentenyl diphosphate biosynthesis via DXP pathway; isopentenyl diphosphate from 1-deoxy-D-xylulose 5-phosphate: step 1/6. Catalyzes the NADPH-dependent rearrangement and reduction of 1-deoxy-D-xylulose-5-phosphate (DXP) to 2-C-methyl-D-erythritol 4-phosphate (MEP). The chain is 1-deoxy-D-xylulose 5-phosphate reductoisomerase from Campylobacter lari (strain RM2100 / D67 / ATCC BAA-1060).